Here is a 165-residue protein sequence, read N- to C-terminus: Large ribosomal subunit protein uL10 (165 aa).

The protein belongs to the universal ribosomal protein uL10 family. In terms of assembly, part of the ribosomal stalk of the 50S ribosomal subunit. The N-terminus interacts with L11 and the large rRNA to form the base of the stalk. The C-terminus forms an elongated spine to which L12 dimers bind in a sequential fashion forming a multimeric L10(L12)X complex.

Functionally, forms part of the ribosomal stalk, playing a central role in the interaction of the ribosome with GTP-bound translation factors. This Cronobacter sakazakii (strain ATCC BAA-894) (Enterobacter sakazakii) protein is Large ribosomal subunit protein uL10.